Here is a 710-residue protein sequence, read N- to C-terminus: Methionine--tRNA ligase (710 aa).

The short motif at 16 to 26 is the 'HIGH' region element; the sequence is PYANGAFHIGH. Residues Cys147, Cys150, Cys160, and Cys163 each coordinate Zn(2+). A 'KMSKS' region motif is present at residues 350 to 354; it reads KMSKS. Lys353 contributes to the ATP binding site. In terms of domain architecture, tRNA-binding spans 604-710; sequence DFAKIDLRIA…PGAEPGMRVG (107 aa).

It belongs to the class-I aminoacyl-tRNA synthetase family. MetG type 1 subfamily. Homodimer. Requires Zn(2+) as cofactor.

It localises to the cytoplasm. The enzyme catalyses tRNA(Met) + L-methionine + ATP = L-methionyl-tRNA(Met) + AMP + diphosphate. Is required not only for elongation of protein synthesis but also for the initiation of all mRNA translation through initiator tRNA(fMet) aminoacylation. The sequence is that of Methionine--tRNA ligase from Herminiimonas arsenicoxydans.